Consider the following 222-residue polypeptide: Histone H1.5 (222 aa).

A compositionally biased stretch (low complexity) spans 1–16; that stretch reads MSETAPAETTAPAPVE. The interval 1 to 55 is disordered; that stretch reads MSETAPAETTAPAPVEKSPAKKKTKKAGAAKRKATGPPVSELITKAVSASKERGG. N-acetylserine is present on S2. A Phosphoserine modification is found at S2. The residue at position 17 (K17) is an N6-acetyllysine. A Phosphoserine modification is found at S18. Positions 20-34 are enriched in basic residues; that stretch reads AKKKTKKAGAAKRKA. Position 26 is an N6-methyllysine (K26). K33 is subject to N6-(beta-hydroxybutyryl)lysine; alternate. An N6-succinyllysine; alternate modification is found at K33. T35 carries the phosphothreonine modification. Residues 35–108 enclose the H15 domain; the sequence is TGPPVSELIT…GASGSFKLNK (74 aa). An N6-acetyllysine modification is found at K45. K51 bears the N6-(beta-hydroxybutyryl)lysine mark. The residue at position 53 (R53) is a Citrulline. K63 bears the N6-(beta-hydroxybutyryl)lysine mark. An N6-acetyllysine modification is found at K74. N6-(beta-hydroxybutyryl)lysine is present on residues K84, K89, and K105. A disordered region spans residues 94–222; the sequence is QTKGTGASGS…KVKKAVSKKK (129 aa). The segment covering 118–129 has biased composition (basic residues); the sequence is KAKKTGAAKAKK. T134 and T151 each carry phosphothreonine. Residues 136–157 are compositionally biased toward basic residues; it reads KKPKKTAGAKKTVKKTPKKAKK. The residue at position 164 (K164) is an N6-acetyllysine. The span at 165 to 183 shows a compositional bias: basic residues; it reads KVTKSPKKAKAAAKPKKAT. 2 positions are modified to phosphoserine: S169 and S185. A compositionally biased stretch (basic residues) spans 190-222; the sequence is KAVKSKASKPKVTKPKAAKPKAAKVKKAVSKKK.

This sequence belongs to the histone H1/H5 family. In terms of assembly, interacts with MSX1. H1 histones are progressively phosphorylated during the cell cycle, becoming maximally phosphorylated during late G2 phase and M phase, and being dephosphorylated sharply thereafter. In terms of processing, citrullination at Arg-53 (H1R54ci) by PADI4 takes place within the DNA-binding site of H1 and results in its displacement from chromatin and global chromatin decondensation, thereby promoting pluripotency and stem cell maintenance.

Its subcellular location is the nucleus. The protein resides in the chromosome. Histone H1 protein binds to linker DNA between nucleosomes forming the macromolecular structure known as the chromatin fiber. Histones H1 are necessary for the condensation of nucleosome chains into higher-order structured fibers. Also acts as a regulator of individual gene transcription through chromatin remodeling, nucleosome spacing and DNA methylation. In Rattus norvegicus (Rat), this protein is Histone H1.5 (H1-5).